A 313-amino-acid chain; its full sequence is Ribosomal RNA small subunit methyltransferase H (313 aa).

S-adenosyl-L-methionine-binding positions include 35-37 (GGH), D55, F81, D103, and Q110.

This sequence belongs to the methyltransferase superfamily. RsmH family.

It is found in the cytoplasm. It carries out the reaction cytidine(1402) in 16S rRNA + S-adenosyl-L-methionine = N(4)-methylcytidine(1402) in 16S rRNA + S-adenosyl-L-homocysteine + H(+). Specifically methylates the N4 position of cytidine in position 1402 (C1402) of 16S rRNA. The protein is Ribosomal RNA small subunit methyltransferase H of Pseudomonas syringae pv. syringae (strain B728a).